We begin with the raw amino-acid sequence, 603 residues long: Myotubularin (603 aa).

Polar residues predominate over residues 1–13 (MASASTSKYNSHS). The segment at 1–25 (MASASTSKYNSHSLENESIKRTSRD) is disordered. Serine 13 and serine 18 each carry phosphoserine. The span at 14-25 (LENESIKRTSRD) shows a compositional bias: basic and acidic residues. A GRAM domain is found at 29–97 (RDLTEAVPRL…GVISRIEKMG (69 aa)). The 376-residue stretch at 163 to 538 (GWTVYNPVEE…RHLELWVNYY (376 aa)) folds into the Myotubularin phosphatase domain. A 1,2-diacyl-sn-glycero-3-phospho-(1D-myo-inositol-3,5-bisphosphate)-binding residues include asparagine 288, asparagine 313, and isoleucine 314. A 1,2-diacyl-sn-glycero-3-phospho-(1D-myo-inositol-3-phosphate) is bound by residues asparagine 288, asparagine 313, and isoleucine 314. Residue cysteine 375 is the Phosphocysteine intermediate of the active site. A 1,2-diacyl-sn-glycero-3-phospho-(1D-myo-inositol-3,5-bisphosphate) contacts are provided by serine 376, aspartate 377, glycine 378, tryptophan 379, aspartate 380, arginine 381, lysine 417, and arginine 421. Residues serine 376, aspartate 377, glycine 378, tryptophan 379, aspartate 380, and arginine 381 each coordinate a 1,2-diacyl-sn-glycero-3-phospho-(1D-myo-inositol-3-phosphate). Arginine 421 contacts a 1,2-diacyl-sn-glycero-3-phospho-(1D-myo-inositol-3-phosphate). Threonine 495 carries the post-translational modification Phosphothreonine. The disordered stretch occupies residues 579 to 603 (SAKLSDPPTSPSSPSQMMPHVQTHF). Residue serine 588 is modified to Phosphoserine.

This sequence belongs to the protein-tyrosine phosphatase family. Non-receptor class myotubularin subfamily. Heterodimer with MTMR12. Interacts with KMT2A/MLL1 (via SET domain). Interacts with DES in skeletal muscle but not in cardiac muscle. Interacts with SPEG.

The protein resides in the cytoplasm. Its subcellular location is the cell membrane. The protein localises to the cell projection. It localises to the filopodium. It is found in the ruffle. The protein resides in the late endosome. Its subcellular location is the myofibril. The protein localises to the sarcomere. It catalyses the reaction a 1,2-diacyl-sn-glycero-3-phospho-(1D-myo-inositol-3-phosphate) + H2O = a 1,2-diacyl-sn-glycero-3-phospho-(1D-myo-inositol) + phosphate. It carries out the reaction a 1,2-diacyl-sn-glycero-3-phospho-(1D-myo-inositol-3,5-bisphosphate) + H2O = a 1,2-diacyl-sn-glycero-3-phospho-(1D-myo-inositol-5-phosphate) + phosphate. The enzyme catalyses 1,2-dioctanoyl-sn-glycero-3-phospho-(1-D-myo-inositol-3-phosphate) + H2O = 1,2-dioctanoyl-sn-glycero-3-phospho-(1D-myo-inositol) + phosphate. The catalysed reaction is 1,2-dioctanoyl-sn-glycero-3-phospho-(1D-myo-inositol-3,5-bisphosphate) + H2O = 1,2-dioctanoyl-sn-glycero-3-phospho-(1D-myo-inositol-5-phosphate) + phosphate. It catalyses the reaction 1,2-dihexadecanoyl-sn-glycero-3-phospho-(1D-myo-inositol-3,5-phosphate) + H2O = 1,2-dihexadecanoyl-sn-glycero-3-phospho-(1D-myo-inositol-5-phosphate) + phosphate. Its activity is regulated as follows. Allosterically activated by phosphatidylinositol 5-phosphate (PI5P). Lipid phosphatase which dephosphorylates phosphatidylinositol 3-monophosphate (PI3P) and phosphatidylinositol 3,5-bisphosphate (PI(3,5)P2). Has also been shown to dephosphorylate phosphotyrosine- and phosphoserine-containing peptides. Negatively regulates EGFR degradation through regulation of EGFR trafficking from the late endosome to the lysosome. Plays a role in vacuolar formation and morphology. Regulates desmin intermediate filament assembly and architecture. Plays a role in mitochondrial morphology and positioning. Required for skeletal muscle maintenance but not for myogenesis. In skeletal muscles, stabilizes MTMR12 protein levels. The sequence is that of Myotubularin from Homo sapiens (Human).